The sequence spans 337 residues: Anthranilate phosphoribosyltransferase (337 aa).

Residues glycine 81, 84–85 (GD), threonine 89, 91–94 (NIST), 109–117 (KHGNRALSS), and threonine 121 each bind 5-phospho-alpha-D-ribose 1-diphosphate. Glycine 81 contributes to the anthranilate binding site. Serine 93 serves as a coordination point for Mg(2+). Asparagine 112 contacts anthranilate. Residue arginine 167 participates in anthranilate binding. Residues aspartate 225 and glutamate 226 each coordinate Mg(2+).

It belongs to the anthranilate phosphoribosyltransferase family. In terms of assembly, homodimer. Requires Mg(2+) as cofactor.

It carries out the reaction N-(5-phospho-beta-D-ribosyl)anthranilate + diphosphate = 5-phospho-alpha-D-ribose 1-diphosphate + anthranilate. It functions in the pathway amino-acid biosynthesis; L-tryptophan biosynthesis; L-tryptophan from chorismate: step 2/5. Catalyzes the transfer of the phosphoribosyl group of 5-phosphorylribose-1-pyrophosphate (PRPP) to anthranilate to yield N-(5'-phosphoribosyl)-anthranilate (PRA). This Rhizobium meliloti (strain 1021) (Ensifer meliloti) protein is Anthranilate phosphoribosyltransferase.